Here is a 389-residue protein sequence, read N- to C-terminus: LL-diaminopimelate aminotransferase (389 aa).

Residues Y16 and G41 each contribute to the substrate site. Pyridoxal 5'-phosphate-binding positions include Y70, 104 to 105 (SK), Y129, N179, Y210, and 239 to 241 (SLS). Substrate is bound by residues K105, Y129, and N179. K242 carries the post-translational modification N6-(pyridoxal phosphate)lysine. A pyridoxal 5'-phosphate-binding site is contributed by R250. R369 lines the substrate pocket.

It belongs to the class-I pyridoxal-phosphate-dependent aminotransferase family. LL-diaminopimelate aminotransferase subfamily. Homodimer. It depends on pyridoxal 5'-phosphate as a cofactor.

It carries out the reaction (2S,6S)-2,6-diaminopimelate + 2-oxoglutarate = (S)-2,3,4,5-tetrahydrodipicolinate + L-glutamate + H2O + H(+). It participates in amino-acid biosynthesis; L-lysine biosynthesis via DAP pathway; LL-2,6-diaminopimelate from (S)-tetrahydrodipicolinate (aminotransferase route): step 1/1. Functionally, involved in the synthesis of meso-diaminopimelate (m-DAP or DL-DAP), required for both lysine and peptidoglycan biosynthesis. Catalyzes the direct conversion of tetrahydrodipicolinate to LL-diaminopimelate. In Nitratidesulfovibrio vulgaris (strain DSM 19637 / Miyazaki F) (Desulfovibrio vulgaris), this protein is LL-diaminopimelate aminotransferase.